The following is a 60-amino-acid chain: Large ribosomal subunit protein bL32 (60 aa).

Basic residues predominate over residues 1-19 (MAVPKRRTSKRRKRARNTH). The tract at residues 1 to 20 (MAVPKRRTSKRRKRARNTHK) is disordered.

The protein belongs to the bacterial ribosomal protein bL32 family.

The protein is Large ribosomal subunit protein bL32 of Gemmatimonas aurantiaca (strain DSM 14586 / JCM 11422 / NBRC 100505 / T-27).